The following is a 292-amino-acid chain: Putative xanthine dehydrogenase FAD-binding subunit XdhB (292 aa).

Residues 1–176 form the FAD-binding PCMH-type domain; it reads MFDFASYHRA…VAFHFPPQPK (176 aa). FAD is bound by residues 27–34, 109–113, Ile165, and Phe184; these read KLLAGGTD and ATYGG.

As to quaternary structure, heterotrimer of XdhA, XdhB and XdhC. The cofactor is FAD.

The catalysed reaction is xanthine + NAD(+) + H2O = urate + NADH + H(+). It catalyses the reaction hypoxanthine + NAD(+) + H2O = xanthine + NADH + H(+). The protein operates within purine metabolism; hypoxanthine degradation; urate from hypoxanthine: step 1/2. Its pathway is purine metabolism; hypoxanthine degradation; urate from hypoxanthine: step 2/2. Presumed to be a dehydrogenase, but possibly an oxidase. Participates in limited purine salvage (requires aspartate) but does not support aerobic growth on purines as the sole carbon source (purine catabolism). This chain is Putative xanthine dehydrogenase FAD-binding subunit XdhB (xdhB), found in Escherichia coli (strain K12).